We begin with the raw amino-acid sequence, 689 residues long: Long-chain fatty acid transport protein 5 (689 aa).

Residues M1–A29 lie on the Cytoplasmic side of the membrane. Helical transmembrane passes span L30–L50 and I55–L75. Topologically, residues P76–L689 are cytoplasmic. I292–P303 is a binding site for AMP.

Belongs to the ATP-dependent AMP-binding enzyme family. As to expression, liver-specific (at protein level). In liver expressed in a periportal distribution.

It is found in the endoplasmic reticulum membrane. The protein resides in the microsome. Its subcellular location is the cell membrane. The catalysed reaction is a fatty acid(in) = a fatty acid(out). It carries out the reaction cholate + ATP + CoA = choloyl-CoA + AMP + diphosphate. The enzyme catalyses (25R)-3alpha,7alpha,12alpha-trihydroxy-5beta-cholestan-26-oate + ATP + CoA = (25R)-3alpha,7alpha,12alpha-trihydroxy-5beta-cholestan-26-oyl-CoA + AMP + diphosphate. It catalyses the reaction chenodeoxycholate + ATP + CoA = chenodeoxycholoyl-CoA + AMP + diphosphate. The catalysed reaction is deoxycholate + ATP + CoA = deoxycholoyl-CoA + AMP + diphosphate. It carries out the reaction lithocholate + ATP + CoA = lithocholoyl-CoA + AMP + diphosphate. The enzyme catalyses a very long-chain fatty acid + ATP + CoA = a very long-chain fatty acyl-CoA + AMP + diphosphate. It catalyses the reaction tetracosanoate + ATP + CoA = tetracosanoyl-CoA + AMP + diphosphate. The catalysed reaction is hexacosanoate + ATP + CoA = hexacosanoyl-CoA + AMP + diphosphate. It carries out the reaction a long-chain fatty acid + ATP + CoA = a long-chain fatty acyl-CoA + AMP + diphosphate. The enzyme catalyses octadecanoate + ATP + CoA = octadecanoyl-CoA + AMP + diphosphate. It catalyses the reaction eicosanoate + ATP + CoA = eicosanoyl-CoA + AMP + diphosphate. Mediates the import of long-chain fatty acids (LCFA) by facilitating their transport across cell membranes. Also catalyzes the ATP-dependent formation of fatty acyl-CoA using LCFA and very-long-chain fatty acids (VLCFA) as substrates. Mainly functions as a bile acyl-CoA synthetase catalyzing the activation of bile acids via ATP-dependent formation of bile acid CoA thioesters which is necessary for their subsequent conjugation with glycine or taurine. Both primary bile acids (cholic acid and chenodeoxycholic acid) and secondary bile acids (deoxycholic acid and lithocholic acid) are the principal substrates. In vitro, activates 3-alpha,7-alpha,12-alpha-trihydroxy-5-beta-cholestanate ((25R)-3alpha,7alpha,12alpha-trihydroxy-5beta-cholestan-26-oate or THCA), the C27 precursor of cholic acid deriving from the de novo synthesis from cholesterol. Plays an important role in hepatic fatty acid uptake and bile acid reconjugation and recycling but not in de novo synthesis of bile acids. The polypeptide is Long-chain fatty acid transport protein 5 (Slc27a5) (Mus musculus (Mouse)).